The following is a 246-amino-acid chain: 1-(5-phosphoribosyl)-5-[(5-phosphoribosylamino)methylideneamino] imidazole-4-carboxamide isomerase (246 aa).

Asp-8 functions as the Proton acceptor in the catalytic mechanism. Catalysis depends on Asp-131, which acts as the Proton donor.

The protein belongs to the HisA/HisF family.

The protein localises to the cytoplasm. The enzyme catalyses 1-(5-phospho-beta-D-ribosyl)-5-[(5-phospho-beta-D-ribosylamino)methylideneamino]imidazole-4-carboxamide = 5-[(5-phospho-1-deoxy-D-ribulos-1-ylimino)methylamino]-1-(5-phospho-beta-D-ribosyl)imidazole-4-carboxamide. The protein operates within amino-acid biosynthesis; L-histidine biosynthesis; L-histidine from 5-phospho-alpha-D-ribose 1-diphosphate: step 4/9. This is 1-(5-phosphoribosyl)-5-[(5-phosphoribosylamino)methylideneamino] imidazole-4-carboxamide isomerase from Albidiferax ferrireducens (strain ATCC BAA-621 / DSM 15236 / T118) (Rhodoferax ferrireducens).